The following is a 274-amino-acid chain: NH(3)-dependent NAD(+) synthetase (274 aa).

Gly-46–Ser-53 contributes to the ATP binding site. Mg(2+) is bound at residue Asp-52. Position 140 (Arg-140) interacts with deamido-NAD(+). Thr-160 lines the ATP pocket. Residue Glu-165 coordinates Mg(2+). Residues Lys-173 and Asp-180 each coordinate deamido-NAD(+). The ATP site is built by Lys-189 and Thr-211. His-260–Lys-261 provides a ligand contact to deamido-NAD(+).

Belongs to the NAD synthetase family. As to quaternary structure, homodimer.

The enzyme catalyses deamido-NAD(+) + NH4(+) + ATP = AMP + diphosphate + NAD(+) + H(+). The protein operates within cofactor biosynthesis; NAD(+) biosynthesis; NAD(+) from deamido-NAD(+) (ammonia route): step 1/1. Functionally, catalyzes the ATP-dependent amidation of deamido-NAD to form NAD. Uses ammonia as a nitrogen source. In Lactococcus lactis subsp. lactis (strain IL1403) (Streptococcus lactis), this protein is NH(3)-dependent NAD(+) synthetase.